Reading from the N-terminus, the 65-residue chain is Large ribosomal subunit protein bL35 (65 aa).

The protein belongs to the bacterial ribosomal protein bL35 family.

The chain is Large ribosomal subunit protein bL35 from Xanthomonas campestris pv. campestris (strain ATCC 33913 / DSM 3586 / NCPPB 528 / LMG 568 / P 25).